We begin with the raw amino-acid sequence, 261 residues long: Fructoselysine 6-kinase (261 aa).

The protein belongs to the carbohydrate kinase PfkB family. As to quaternary structure, monomer.

It carries out the reaction N(6)-(D-fructosyl)-L-lysine + ATP = N(6)-(6-phospho-D-fructosyl)-L-lysine + ADP + H(+). The protein operates within carbohydrate metabolism; fructoselysine degradation; D-glucose 6-phosphate and lysine from fructoselysine: step 1/2. Functionally, catalyzes the ATP-dependent phosphorylation of fructoselysine to fructoselysine 6-phosphate. Functions in a fructoselysine degradation pathway that allows E.coli to grow on fructoselysine or psicoselysine. To a much lesser extenst, is also able to phosphorylate psicoselysine. The sequence is that of Fructoselysine 6-kinase from Escherichia coli (strain K12).